Reading from the N-terminus, the 686-residue chain is MLAVPEMGLQGLYIGSSPERSPVPSPPGSPRTQESCGIAPLTPSQSPKPEVRAPQQASFSVVVAIDFGTTSSGYAFSFASDPEAIHMMRKWEGGDPGVAHQKTPTCLLLTPEGAFHSFGYTARDYYHDLDPEEARDWLYFEKFKMKIHSATDLTLKTQLEAVNGKTMPALEVFAHALRFFREHALQELREQSPSLPEKDTVRWVLTVPAIWKQPAKQFMREAAYLAGLVSRENAEQLLIALEPEAASVYCRKLRLHQLLDLSGRAPGGGRLGERRSIDSSFRQAREQLRRSRHSRTFLVESGVGELWAEMQAGDRYVVADCGGGTVDLTVHQLEQPHGTLKELYKASGGPYGAVGVDLAFEQLLCRIFGEDFIATFKRQRPAAWVDLTIAFEARKRTAGPHRAGALNISLPFSFIDFYRKQRGHNVETALRRSSVNFVKWSSQGMLRMSCEAMNELFQPTVSGIIQHIEALLARPEVQGVKLLFLVGGFAESAVLQHAVQAALGARGLRVVVPHDVGLTILKGAVLFGQAPGVVRVRRSPLTYGVGVLNRFVPGRHPPEKLLVRDGRRWCTDVFERFVAAEQSVALGEEVRRSYCPARPGQRRVLINLYCCAAEDARFITDPGVRKCGALSLELEPADCGQDTAGAPPGRREIRAAMQFGDTEIKVTAVDVSTNRSVRASIDFLSN.

The tract at residues 12–53 (LYIGSSPERSPVPSPPGSPRTQESCGIAPLTPSQSPKPEVRA) is disordered. A phosphoserine mark is found at Ser25 and Ser29. Thr42 bears the Phosphothreonine mark. A phosphoserine mark is found at Ser44, Ser46, and Ser276.

The protein belongs to the heat shock protein 70 family. Highest expression in muscle and heart. Lower levels in liver and kidney.

In Homo sapiens (Human), this protein is Heat shock 70 kDa protein 12B (HSPA12B).